A 129-amino-acid polypeptide reads, in one-letter code: Flagellar assembly factor FliW 2 (129 aa).

It belongs to the FliW family. Interacts with translational regulator CsrA and flagellin(s).

It localises to the cytoplasm. Its function is as follows. Acts as an anti-CsrA protein, binds CsrA and prevents it from repressing translation of its target genes, one of which is flagellin. Binds to flagellin and participates in the assembly of the flagellum. The sequence is that of Flagellar assembly factor FliW 2 from Helicobacter pylori (strain J99 / ATCC 700824) (Campylobacter pylori J99).